The chain runs to 519 residues: Dolichol kinase (519 aa).

Over 1–47 (MVAIIPHASFTTIKLTQKTEGSQMPTEEICKINMRTRKFDVGGNSRD) the chain is Cytoplasmic. Residues 48–68 (FECFYSNFVQTVILLGTFFYC) traverse the membrane as a helical segment. Residues 69–88 (VERLQPWSIVTADISYKQIF) lie on the Lumenal side of the membrane. The chain crosses the membrane as a helical span at residues 89–109 (VNVFVVCLIMVGLIFTKYWQH). The Cytoplasmic portion of the chain corresponds to 110 to 118 (GYKSLPKFD). Residues 119-139 (TIYSLYLPFMVSLLFDTSSTV) traverse the membrane as a helical segment. Residues 140 to 151 (INTILILSVLNS) lie on the Lumenal side of the membrane. The chain crosses the membrane as a helical span at residues 152 to 172 (YRWRTQLVVIILQLCLIFFNF). Topologically, residues 173 to 181 (EAGDRLKNI) are cytoplasmic. The helical transmembrane segment at 182-203 (ISIVINSLLSLILKYIGQLKSL) threads the bilayer. Topologically, residues 204-223 (DNIDSNLFSILLTNILYVSE) are lumenal. The chain crosses the membrane as a helical span at residues 224-244 (AGTVHFRILKGIILALTTIIS). Topologically, residues 245–253 (INYVLKKVM) are cytoplasmic. A helical transmembrane segment spans residues 254-274 (HFKPFMLSISFAIGLPLFANT). Residues 275–294 (FIHLEDGENPLLWLVKYILE) are Lumenal-facing. Residues 295 to 315 (STIRQKILFAWSSILILSIPS) form a helical membrane-spanning segment. The Cytoplasmic portion of the chain corresponds to 316–326 (ILIEKDSLSLN). Residues 327–347 (TSRKLWHFIIFLLIIPSFQMD) traverse the membrane as a helical segment. The Lumenal segment spans residues 348–349 (SN). A helical membrane pass occupies residues 350–370 (FVKIALSGTIPVFLSIEYIRF). Topologically, residues 371–394 (QNLPPLGSAIELQLRRFADDRDHS) are cytoplasmic. Residues 395-415 (GPLIISYLYLLFGISTPLLMN) traverse the membrane as a helical segment. The Lumenal portion of the chain corresponds to 416–417 (NS). A helical transmembrane segment spans residues 418 to 438 (PMGLIGLGIGDSLASIIGKRY). The Cytoplasmic portion of the chain corresponds to 439–449 (GRIRWKGTQKT). Residues 450 to 470 (LEGTLAFIVTSFIVCLVLLRF) traverse the membrane as a helical segment. The Lumenal segment spans residues 471-472 (DK). The chain crosses the membrane as a helical span at residues 473 to 493 (AAIFNHLTTLQLLTLCTLSGV). The Cytoplasmic segment spans residues 494–519 (LEGNSVLNDNILIPAFMMICEKLITL).

It belongs to the polyprenol kinase family.

The protein localises to the endoplasmic reticulum membrane. The enzyme catalyses a di-trans,poly-cis-dolichol + CTP = a di-trans,poly-cis-dolichyl phosphate + CDP + H(+). The protein operates within protein modification; protein glycosylation. Catalyzes CTP-mediated phosphorylation of dolichol, the terminal step in de novo dolichyl monophosphate (Dol-P) biosynthesis. Dol-P is a lipid carrier essential for the synthesis of N-linked and O-linked oligosaccharides and for GPI anchors. This chain is Dolichol kinase (SEC59), found in Saccharomyces cerevisiae (strain ATCC 204508 / S288c) (Baker's yeast).